A 95-amino-acid polypeptide reads, in one-letter code: uncharacterized protein (95 aa).

Positions 1–21 are cleaved as a signal peptide; that stretch reads MKKITLFFTALLCLFSTSVLA.

This is an uncharacterized protein from Haemophilus influenzae (strain ATCC 51907 / DSM 11121 / KW20 / Rd).